We begin with the raw amino-acid sequence, 242 residues long: Probable transcriptional regulatory protein NMA1902 (242 aa).

The protein belongs to the TACO1 family.

It is found in the cytoplasm. In Neisseria meningitidis serogroup A / serotype 4A (strain DSM 15465 / Z2491), this protein is Probable transcriptional regulatory protein NMA1902.